The following is a 337-amino-acid chain: Dihydroorotate dehydrogenase (quinone) (337 aa).

FMN-binding positions include A58–K62 and T82. Position 62 (K62) interacts with substrate. N107–F111 is a binding site for substrate. N137 and N170 together coordinate FMN. N170 serves as a coordination point for substrate. Residue S173 is the Nucleophile of the active site. A substrate-binding site is contributed by N175. FMN contacts are provided by K215 and T243. Residue N244–T245 participates in substrate binding. FMN contacts are provided by residues G266, G294, and Y315 to S316.

The protein belongs to the dihydroorotate dehydrogenase family. Type 2 subfamily. As to quaternary structure, monomer. Requires FMN as cofactor.

Its subcellular location is the cell membrane. It carries out the reaction (S)-dihydroorotate + a quinone = orotate + a quinol. Its pathway is pyrimidine metabolism; UMP biosynthesis via de novo pathway; orotate from (S)-dihydroorotate (quinone route): step 1/1. In terms of biological role, catalyzes the conversion of dihydroorotate to orotate with quinone as electron acceptor. This chain is Dihydroorotate dehydrogenase (quinone), found in Dichelobacter nodosus (strain VCS1703A).